The sequence spans 325 residues: Tetraacyldisaccharide 4'-kinase (325 aa).

ATP is bound at residue 55–62; sequence TAGGNGKT.

It belongs to the LpxK family.

The catalysed reaction is a lipid A disaccharide + ATP = a lipid IVA + ADP + H(+). It functions in the pathway glycolipid biosynthesis; lipid IV(A) biosynthesis; lipid IV(A) from (3R)-3-hydroxytetradecanoyl-[acyl-carrier-protein] and UDP-N-acetyl-alpha-D-glucosamine: step 6/6. In terms of biological role, transfers the gamma-phosphate of ATP to the 4'-position of a tetraacyldisaccharide 1-phosphate intermediate (termed DS-1-P) to form tetraacyldisaccharide 1,4'-bis-phosphate (lipid IVA). This chain is Tetraacyldisaccharide 4'-kinase, found in Salmonella paratyphi B (strain ATCC BAA-1250 / SPB7).